A 66-amino-acid polypeptide reads, in one-letter code: Sodium channel neurotoxin MeuNaTxalpha-7 (66 aa).

One can recognise an LCN-type CS-alpha/beta domain in the interval Arg-2–Asn-64. 4 disulfides stabilise this stretch: Cys-12–Cys-63, Cys-16–Cys-36, Cys-22–Cys-46, and Cys-26–Cys-48. An Asparagine amide modification is found at Asn-64.

It belongs to the long (4 C-C) scorpion toxin superfamily. Sodium channel inhibitor family. Alpha subfamily. Expressed by the venom gland.

The protein localises to the secreted. Its function is as follows. Alpha toxins bind voltage-independently at site-3 of sodium channels (Nav) and inhibit the inactivation of the activated channels, thereby blocking neuronal transmission. The protein is Sodium channel neurotoxin MeuNaTxalpha-7 of Mesobuthus eupeus (Lesser Asian scorpion).